The primary structure comprises 185 residues: Ribosome-recycling factor (185 aa).

This sequence belongs to the RRF family.

It is found in the cytoplasm. Its function is as follows. Responsible for the release of ribosomes from messenger RNA at the termination of protein biosynthesis. May increase the efficiency of translation by recycling ribosomes from one round of translation to another. In Buchnera aphidicola subsp. Acyrthosiphon pisum (strain 5A), this protein is Ribosome-recycling factor.